We begin with the raw amino-acid sequence, 122 residues long: Cytochrome c3 hydrogenase large chain (122 aa).

It depends on Fe cation as a cofactor.

It catalyses the reaction 2 Fe(III)-[cytochrome c3] + H2 = 2 Fe(II)-[cytochrome c3] + 2 H(+). This is Cytochrome c3 hydrogenase large chain (hoxG) from Acidithiobacillus ferrooxidans (Thiobacillus ferrooxidans).